The primary structure comprises 322 residues: Tyrosine recombinase XerC (322 aa).

One can recognise a Core-binding (CB) domain in the interval 14–104; the sequence is PDLREAAAAW…ALRSFARHLD (91 aa). The Tyr recombinase domain occupies 125–311; sequence RLPRPLPVAA…DSARLLSAFD (187 aa). Active-site residues include R170, K195, H263, R266, and H289. Catalysis depends on Y298, which acts as the O-(3'-phospho-DNA)-tyrosine intermediate.

Belongs to the 'phage' integrase family. XerC subfamily. In terms of assembly, forms a cyclic heterotetrameric complex composed of two molecules of XerC and two molecules of XerD.

Its subcellular location is the cytoplasm. Its function is as follows. Site-specific tyrosine recombinase, which acts by catalyzing the cutting and rejoining of the recombining DNA molecules. The XerC-XerD complex is essential to convert dimers of the bacterial chromosome into monomers to permit their segregation at cell division. It also contributes to the segregational stability of plasmids. The sequence is that of Tyrosine recombinase XerC from Methylobacterium nodulans (strain LMG 21967 / CNCM I-2342 / ORS 2060).